A 309-amino-acid chain; its full sequence is UDP-3-O-acyl-N-acetylglucosamine deacetylase (309 aa).

The Zn(2+) site is built by His78, His237, and Asp241. Residue His264 is the Proton donor of the active site.

The protein belongs to the LpxC family. Zn(2+) serves as cofactor.

The catalysed reaction is a UDP-3-O-[(3R)-3-hydroxyacyl]-N-acetyl-alpha-D-glucosamine + H2O = a UDP-3-O-[(3R)-3-hydroxyacyl]-alpha-D-glucosamine + acetate. It participates in glycolipid biosynthesis; lipid IV(A) biosynthesis; lipid IV(A) from (3R)-3-hydroxytetradecanoyl-[acyl-carrier-protein] and UDP-N-acetyl-alpha-D-glucosamine: step 2/6. Functionally, catalyzes the hydrolysis of UDP-3-O-myristoyl-N-acetylglucosamine to form UDP-3-O-myristoylglucosamine and acetate, the committed step in lipid A biosynthesis. The protein is UDP-3-O-acyl-N-acetylglucosamine deacetylase of Methylobacillus flagellatus (strain ATCC 51484 / DSM 6875 / VKM B-1610 / KT).